The primary structure comprises 327 residues: Altered inheritance rate of mitochondria protein 25 (327 aa).

The protein belongs to the phospholipid scramblase family.

The protein resides in the mitochondrion. This Saccharomyces cerevisiae (strain ATCC 204508 / S288c) (Baker's yeast) protein is Altered inheritance rate of mitochondria protein 25 (AIM25).